The chain runs to 147 residues: Small ribosomal subunit protein uS12 (147 aa).

The protein belongs to the universal ribosomal protein uS12 family. As to quaternary structure, part of the 30S ribosomal subunit.

Its function is as follows. With S4 and S5 plays an important role in translational accuracy. Located at the interface of the 30S and 50S subunits. This is Small ribosomal subunit protein uS12 from Sulfurisphaera tokodaii (strain DSM 16993 / JCM 10545 / NBRC 100140 / 7) (Sulfolobus tokodaii).